Here is a 392-residue protein sequence, read N- to C-terminus: MPKTIMLLGSGELGKEFVIAVKRLGQRVVAVDSYDDAPAQQVADRREVIDMLDGRALDAIVAKHRPDIIVPEIEAIRTERFYDYEKQGIQVVPSARAANFTMNRKAIRDLAARDLGLRTANYRYASSLEELRSAVGEVGLPCVVKPLMSSSGKGQSTVRSEAEIEAAWSYSQSGKRGDIAEVIVEAFVPFHTEITLLTVTQKNGPTLFCPPIGHRQERGDYQESWQPCRISPEQLEEAQNIAGKVTEALTGAGIWGVEFFLADDGVYFSELSPRPHDTGMVTLAGTQNLSEFELHARAVLGLPVPDITLLRAGASAVILADRVGNNPSFDGLDAALAEPGSDIRIFGKPVMRPYRRMGVALMSGEKGSDVDELKRQAIANAEKVMIKCDETV.

N(1)-(5-phospho-beta-D-ribosyl)glycinamide-binding positions include 12-13 (EL) and Glu-72. Residues Arg-104, Lys-145, 150 to 155 (SSGKGQ), 185 to 188 (EAFV), and Glu-193 contribute to the ATP site. The ATP-grasp domain occupies 109-300 (DLAARDLGLR…EFELHARAVL (192 aa)). Glu-258 and Glu-270 together coordinate Mg(2+). N(1)-(5-phospho-beta-D-ribosyl)glycinamide contacts are provided by residues Asp-277, Lys-348, and 355–356 (RR).

It belongs to the PurK/PurT family. Homodimer.

It catalyses the reaction N(1)-(5-phospho-beta-D-ribosyl)glycinamide + formate + ATP = N(2)-formyl-N(1)-(5-phospho-beta-D-ribosyl)glycinamide + ADP + phosphate + H(+). Its pathway is purine metabolism; IMP biosynthesis via de novo pathway; N(2)-formyl-N(1)-(5-phospho-D-ribosyl)glycinamide from N(1)-(5-phospho-D-ribosyl)glycinamide (formate route): step 1/1. Functionally, involved in the de novo purine biosynthesis. Catalyzes the transfer of formate to 5-phospho-ribosyl-glycinamide (GAR), producing 5-phospho-ribosyl-N-formylglycinamide (FGAR). Formate is provided by PurU via hydrolysis of 10-formyl-tetrahydrofolate. The polypeptide is Formate-dependent phosphoribosylglycinamide formyltransferase (Chlorobaculum tepidum (strain ATCC 49652 / DSM 12025 / NBRC 103806 / TLS) (Chlorobium tepidum)).